The primary structure comprises 355 residues: Methylthioribose-1-phosphate isomerase (355 aa).

Residues 47-49 (RGA), R90, and Q197 contribute to the substrate site. D238 (proton donor) is an active-site residue. 248 to 249 (NK) contacts substrate.

Belongs to the eIF-2B alpha/beta/delta subunits family. MtnA subfamily.

It catalyses the reaction 5-(methylsulfanyl)-alpha-D-ribose 1-phosphate = 5-(methylsulfanyl)-D-ribulose 1-phosphate. It functions in the pathway amino-acid biosynthesis; L-methionine biosynthesis via salvage pathway; L-methionine from S-methyl-5-thio-alpha-D-ribose 1-phosphate: step 1/6. In terms of biological role, catalyzes the interconversion of methylthioribose-1-phosphate (MTR-1-P) into methylthioribulose-1-phosphate (MTRu-1-P). The protein is Methylthioribose-1-phosphate isomerase of Herpetosiphon aurantiacus (strain ATCC 23779 / DSM 785 / 114-95).